A 254-amino-acid polypeptide reads, in one-letter code: Chalcone isomerase cfoK (254 aa).

Catalysis depends on residues histidine 33 and tyrosine 50.

It carries out the reaction a chalcone = a flavanone.. The protein operates within secondary metabolite biosynthesis; flavonoid biosynthesis. Its function is as follows. Chalcone isomerase; part of the gene cluster that mediates the biosynthesis of chlorflavonin, a fungal flavonoid with acetolactate synthase inhibitory activity. Within the pathway, cfoK acts as chalcone isomerase (CHI), the key enzyme responsible for the tricyclic formation of flavanone through Michael-type intramolecular cyclization of chalcone. The hydrogen at C2'-OH is extracted by the imidazole ring of His-33, which induces the oxa-Michael addition to form the intermediate enolate through 6-endo-trig mode cyclization. The enolate can then be stabilized by a hydrogen bond with the Tyr-50 residue. Following enol tautomerization, the C ring, a gamma-pyranone ring, is formed. The pathway begins with the PKS-NRPS hybrid synthetase cfoA that uses benzoic acid or p-hydroxybenzoic acid as a starter unit with four rounds of chain elongation using malonyl-CoA to form the chalcone skeleton. Then, a new type of chalcone isomerase, cfoK, catalyzes the conversion of the chalcone into a flavanone by a histidine-mediated oxa-Michael addition mechanism. The desaturation of flavanone to flavone is catalyzed by a new type of flavone synthase, the flavin mononucleotide (FMN)-dependent oxidoreductase cfoJ. Monooxygenases cfoF, cfoG, and P450 cfoH are responsible for the hydroxylation of the flavonoid skeleton at sites C3, C8, and C2', respectively. Like cfoF, the dehydratase cfoI plays also a role in the hydroxylation of position C3. Methyltransferases cfoB, cfoC, and cfoD then catalyze the methylation of C7-OH, C8-OH, and C3-OH, respectively. Finally, the monooxygenase cfoE is responsible for the chlorination of flavonoid at position C3'. The sequence is that of Chalcone isomerase cfoK from Aspergillus candidus.